Consider the following 630-residue polypeptide: Chaperone protein HtpG (630 aa).

Positions 1-339 are a; substrate-binding; it reads MKGQETRGFQ…SNDLPLNVSR (339 aa). The b stretch occupies residues 340–555; that stretch reads EILQDNSITR…VDEMSTQMAK (216 aa). The tract at residues 556–630 is c; it reads LFAAAGQQVP…MNQLLLSEKA (75 aa).

The protein belongs to the heat shock protein 90 family. In terms of assembly, homodimer.

It is found in the cytoplasm. Its function is as follows. Molecular chaperone. Has ATPase activity. In Photorhabdus laumondii subsp. laumondii (strain DSM 15139 / CIP 105565 / TT01) (Photorhabdus luminescens subsp. laumondii), this protein is Chaperone protein HtpG.